The chain runs to 589 residues: Ubiquilin-1 (589 aa).

A compositionally biased stretch (gly residues) spans 1-11; that stretch reads MAESGESGGPP. Disordered stretches follow at residues 1 to 35 and 110 to 145; these read MAESGESGGPPGSQDSAAGAEGAGAPAAAASAEPK and NRPQDHSAQQTNTAGSNVTTSSTPNSNSTSGSATSN. N-acetylalanine is present on A2. Residues 12–35 are compositionally biased toward low complexity; the sequence is GSQDSAAGAEGAGAPAAAASAEPK. Residues 37–111 enclose the Ubiquitin-like domain; that stretch reads MKVTVKTPKE…VHLVIKTQNR (75 aa). The segment covering 110–124 has biased composition (polar residues); it reads NRPQDHSAQQTNTAG. Over residues 125-145 the composition is skewed to low complexity; that stretch reads SNVTTSSTPNSNSTSGSATSN. The interaction with UBXN4 stretch occupies residues 178–428; sequence QLLSNPEMMV…LNNPLFAGNP (251 aa). STI1 domains are found at residues 182–210 and 212–251; these read NPEMMVQIMENPFVQSMLSNPDLMRQLIM and NPQMQQLIQRNPEISHMLNNPDIMRQTLELARNPAMMQEM. Residues 295–371 are disordered; it reads PFASLVSNTS…NLVPGVGASM (77 aa). Residues 299–313 show a composition bias toward polar residues; it reads LVSNTSSGEGSQPSR. Residues 327–360 show a composition bias toward low complexity; it reads QTSQSSSASSGTASTVGGTTGSTASGTSGQSTTA. 2 consecutive STI1 domains span residues 387–434 and 438–470; these read NPQL…QEQM and LPTFLQQMQNPDTLSAMSNPRAMQALLQIQQGL. The disordered stretch occupies residues 488 to 520; the sequence is LGALGSTGGSSGTNGSNATPSENTSPTAGTTEP. Gly residues predominate over residues 489-499; sequence GALGSTGGSSG. Over residues 509 to 520 the composition is skewed to polar residues; it reads ENTSPTAGTTEP. The UBA domain occupies 546–586; it reads RFQQQLEQLSAMGFLNREANLQALIATGGDINAAIERLLGS.

As to quaternary structure, monomer and homodimer. Heterodimer with UBQLN2. Binds CD47, NBL1, GABRA1, GABRA2, GABRA3, GABRA6, GABRB1, GABRB2 and GABRB3. Binds UBE3A, BTRC, P4HB and MTOR. Interacts with the proteasome 19S subunit. Interacts (via ubiquitin-like domain) with TREX1; the interaction is direct and may control TREX1 subcellular location. Forms a complex with UBXN4 and VCP. Interacts (via UBA domain) with UBQLN4 (via ubiquitin-like domain). Found in a complex with UBQLN2 and MAP1LC3A/B/C. The monomeric form interacts with PSEN2. The monomeric form interacts with PSEN1. Interacts with ORAI1. Interacts (via UBA domain) with TICAM1. Interacts with EPS15. Interacts (via UBA domain) with UBA52 and (via ubiquitin-like domain) with PSMD3 and PSMD4. Interacts with HERPUD1. Interacts with MAP1LC3A/B/C in the presence of UBQLN4. Interacts (via ubiquitin-like domain) with EPS15 (via UIM domains) and both the ubiquitinated and non-ubiquitinated forms can interact with EPS15. Interacts (via ubiquitin-like domain) with EPS15L1, HGS (via UIM domain) and STAM2 (via UIM domain). Interacts with BCL2L10/BCL-B; in the cytoplasm. Monomeric form interacts with PSEN1. Post-translationally, degraded during both macroautophagy and during chaperone-mediated autophagy (CMA). In terms of processing, phosphorylated. Ubiquitinated. As to expression, brain (at protein level). Ubiquitous. Highly expressed throughout the brain; detected in neurons and in neuropathological lesions, such as neurofibrillary tangles and Lewy bodies. Highly expressed in heart, placenta, pancreas, lung, liver, skeletal muscle and kidney.

It is found in the cytoplasm. Its subcellular location is the nucleus. It localises to the endoplasmic reticulum. The protein resides in the cytoplasmic vesicle. The protein localises to the autophagosome. It is found in the cell membrane. Functionally, plays an important role in the regulation of different protein degradation mechanisms and pathways including ubiquitin-proteasome system (UPS), autophagy and endoplasmic reticulum-associated protein degradation (ERAD) pathway. Mediates the proteasomal targeting of misfolded or accumulated proteins for degradation by binding (via UBA domain) to their polyubiquitin chains and by interacting (via ubiquitin-like domain) with the subunits of the proteasome. Plays a role in the ERAD pathway via its interaction with ER-localized proteins UBXN4, VCP and HERPUD1 and may form a link between the polyubiquitinated ERAD substrates and the proteasome. Involved in the regulation of macroautophagy and autophagosome formation; required for maturation of autophagy-related protein LC3 from the cytosolic form LC3-I to the membrane-bound form LC3-II and may assist in the maturation of autophagosomes to autolysosomes by mediating autophagosome-lysosome fusion. Negatively regulates the TICAM1/TRIF-dependent toll-like receptor signaling pathway by decreasing the abundance of TICAM1 via the autophagic pathway. Promotes the ubiquitination and lysosomal degradation of ORAI1, consequently down-regulating the ORAI1-mediated Ca2+ mobilization. Suppresses the maturation and proteasomal degradation of amyloid beta A4 protein (A4) by stimulating the lysine 63 (K63)-linked polyubiquitination. Delays the maturation of A4 by sequestering it in the Golgi apparatus and preventing its transport to the cell surface for subsequent processing. Ubiquitinates BCL2L10 and thereby stabilizes protein abundance. Its function is as follows. Plays a role in unfolded protein response (UPR) by attenuating the induction of UPR-inducible genes, DDTI3/CHOP, HSPA5 and PDIA2 during ER stress. Plays a key role in the regulation of the levels of PSEN1 by targeting its accumulation to aggresomes which may then be removed from cells by autophagocytosis. In terms of biological role, plays a role in unfolded protein response (UPR) by attenuating the induction of UPR-inducible genes, DDTI3/CHOP, HSPA5 and PDIA2 during ER stress. The sequence is that of Ubiquilin-1 (UBQLN1) from Homo sapiens (Human).